The chain runs to 400 residues: Elongation factor Tu (400 aa).

In terms of domain architecture, tr-type G spans 10–210 (KPHCNVGTIG…VDTYIPIPPR (201 aa)). The segment at 19–26 (GHVDHGKT) is G1. 19-26 (GHVDHGKT) contacts GTP. Position 26 (threonine 26) interacts with Mg(2+). Residues 60 to 64 (GLTIA) are G2. The tract at residues 81–84 (DCPG) is G3. Residues 81–85 (DCPGH) and 136–139 (NKCD) contribute to the GTP site. Residues 136-139 (NKCD) form a G4 region. The segment at 174-176 (SAI) is G5.

The protein belongs to the TRAFAC class translation factor GTPase superfamily. Classic translation factor GTPase family. EF-Tu/EF-1A subfamily. Monomer.

It localises to the cytoplasm. It catalyses the reaction GTP + H2O = GDP + phosphate + H(+). Functionally, GTP hydrolase that promotes the GTP-dependent binding of aminoacyl-tRNA to the A-site of ribosomes during protein biosynthesis. This is Elongation factor Tu from Dehalococcoides mccartyi (strain CBDB1).